Reading from the N-terminus, the 281-residue chain is DegV domain-containing protein spr0652 (281 aa).

In terms of domain architecture, DegV spans W3–I280. Hexadecanoate contacts are provided by S63 and S91.

Functionally, may bind long-chain fatty acids, such as palmitate, and may play a role in lipid transport or fatty acid metabolism. This is DegV domain-containing protein spr0652 from Streptococcus pneumoniae (strain ATCC BAA-255 / R6).